We begin with the raw amino-acid sequence, 396 residues long: Inositol polyphosphate 1-phosphatase (396 aa).

Residue D54 participates in Li(+) binding. A Mg(2+)-binding site is contributed by E79. A Li(+)-binding site is contributed by E80. Mg(2+)-binding residues include D153 and I155. D156, S157, T158, S264, K266, G286, A287, K290, and T308 together coordinate 1D-myo-inositol 1,4-bisphosphate. D313 serves as a coordination point for Mg(2+). S314 is modified (phosphoserine).

Belongs to the inositol monophosphatase superfamily. Monomer. The cofactor is Mg(2+).

It carries out the reaction 1D-myo-inositol 1,4-bisphosphate + H2O = 1D-myo-inositol 4-phosphate + phosphate. The catalysed reaction is 1D-myo-inositol 1,3,4-trisphosphate + H2O = 1D-myo-inositol 3,4-bisphosphate + phosphate. It participates in signal transduction; phosphatidylinositol signaling pathway. Its activity is regulated as follows. Inhibited by Li(+). Its function is as follows. Mg(2+)-dependent phosphatase that catalyzes the hydrolysis of the 1-position phosphate from inositol 1,4-bisphosphate and inositol 1,3,4-trisphosphate and participates in inositol phosphate metabolism. This chain is Inositol polyphosphate 1-phosphatase, found in Mus musculus (Mouse).